The primary structure comprises 383 residues: Acetylornithine deacetylase (383 aa).

His80 contributes to the Zn(2+) binding site. Asp82 is an active-site residue. Asp112 serves as a coordination point for Zn(2+). The active site involves Glu144. Zn(2+) is bound by residues Glu145, Glu169, and His355.

Belongs to the peptidase M20A family. ArgE subfamily. In terms of assembly, homodimer. The cofactor is Zn(2+). Co(2+) serves as cofactor. Glutathione is required as a cofactor.

The protein resides in the cytoplasm. It catalyses the reaction N(2)-acetyl-L-ornithine + H2O = L-ornithine + acetate. It participates in amino-acid biosynthesis; L-arginine biosynthesis; L-ornithine from N(2)-acetyl-L-ornithine (linear): step 1/1. Catalyzes the hydrolysis of the amide bond of N(2)-acetylated L-amino acids. Cleaves the acetyl group from N-acetyl-L-ornithine to form L-ornithine, an intermediate in L-arginine biosynthesis pathway, and a branchpoint in the synthesis of polyamines. In Shigella boydii serotype 4 (strain Sb227), this protein is Acetylornithine deacetylase.